The following is a 1213-amino-acid chain: DNA-directed RNA polymerase subunit beta (1213 aa).

The tract at residues 1153 to 1213 (RDMDEDSSEH…ADESDGKVSK (61 aa)) is disordered. The segment covering 1171-1198 (MAEEQEKKKLAEETGKSENKEDSNETAD) has biased composition (basic and acidic residues).

This sequence belongs to the RNA polymerase beta chain family. The RNAP catalytic core consists of 2 alpha, 1 beta, 1 beta' and 1 omega subunit. When a sigma factor is associated with the core the holoenzyme is formed, which can initiate transcription.

The enzyme catalyses RNA(n) + a ribonucleoside 5'-triphosphate = RNA(n+1) + diphosphate. Its function is as follows. DNA-dependent RNA polymerase catalyzes the transcription of DNA into RNA using the four ribonucleoside triphosphates as substrates. In Lactobacillus acidophilus (strain ATCC 700396 / NCK56 / N2 / NCFM), this protein is DNA-directed RNA polymerase subunit beta.